Here is a 591-residue protein sequence, read N- to C-terminus: Alpha-(1-&gt;6)-mannopyranosyltransferase Rv1459c (591 aa).

13 consecutive transmembrane segments (helical) span residues 40–60 (FGAT…ARPV), 80–100 (VSLT…LMLG), 117–137 (TLLL…KDVY), 201–221 (IVAA…LIVW), 235–255 (VSAL…VAGI), 259–279 (ALML…LDMA), 321–341 (EWGP…SSQV), 367–387 (LLLA…ILGW), 408–428 (WMSP…LLGL), 441–461 (AIGV…VLRG), 473–493 (LAVT…WAII), 502–522 (PGFR…GPTA), and 527–547 (FALF…ILLI). Residues 569–591 (ESASKTPATRRPTAAPDAYADST) form a disordered region. Over residues 574–584 (TPATRRPTAAP) the composition is skewed to low complexity.

Belongs to the MptA/B family.

The protein localises to the membrane. Its function is as follows. Catalyzes the addition of alpha-(1-&gt;6)-mannose residue. This chain is Alpha-(1-&gt;6)-mannopyranosyltransferase Rv1459c, found in Mycobacterium tuberculosis (strain ATCC 25618 / H37Rv).